Reading from the N-terminus, the 278-residue chain is Adenosylcobinamide-GDP ribazoletransferase (278 aa).

The next 7 helical transmembrane spans lie at 31–51, 66–86, 115–135, 148–168, 187–207, 215–237, and 247–267; these read AMALAPFVGLALGLLAGSAVF, TLLPAVVGVTVLALVTRGLHL, TIGAFGAIIVLFVVLLQVGAL, ILVAAMTSRLAATLACTGAVP, DAALSFLAVCAVAALAGLLDF, ALRAVLAVWVGTGVSFLLRRYLL, and ILGGLIEITAAATLLVMAMTI.

This sequence belongs to the CobS family. Requires Mg(2+) as cofactor.

It is found in the cell membrane. The enzyme catalyses alpha-ribazole + adenosylcob(III)inamide-GDP = adenosylcob(III)alamin + GMP + H(+). The catalysed reaction is alpha-ribazole 5'-phosphate + adenosylcob(III)inamide-GDP = adenosylcob(III)alamin 5'-phosphate + GMP + H(+). It functions in the pathway cofactor biosynthesis; adenosylcobalamin biosynthesis; adenosylcobalamin from cob(II)yrinate a,c-diamide: step 7/7. Joins adenosylcobinamide-GDP and alpha-ribazole to generate adenosylcobalamin (Ado-cobalamin). Also synthesizes adenosylcobalamin 5'-phosphate from adenosylcobinamide-GDP and alpha-ribazole 5'-phosphate. In Frankia casuarinae (strain DSM 45818 / CECT 9043 / HFP020203 / CcI3), this protein is Adenosylcobinamide-GDP ribazoletransferase.